A 79-amino-acid chain; its full sequence is MTHSVDAILDATGLNCPEPVMMLHNKVRDLAPGGLLKVIATDPSTRRDIPKFCVFLGHELVEQQEEAGTYLYWIRKKAD.

Cysteine 16 serves as the catalytic Cysteine persulfide intermediate.

Belongs to the sulfur carrier protein TusA family.

The protein resides in the cytoplasm. Functionally, sulfur carrier protein which probably makes part of a sulfur-relay system. This chain is Sulfur carrier protein TusA, found in Pseudomonas aeruginosa (strain LESB58).